A 73-amino-acid polypeptide reads, in one-letter code: Putative defensin-like protein 33 (73 aa).

The signal sequence occupies residues 1–25 (MASNKVSFIFILFLCVLSTAEFGEA). Cystine bridges form between Cys33-Cys59, Cys45-Cys68, and Cys49-Cys70.

This sequence belongs to the DEFL family.

The protein resides in the secreted. In Arabidopsis thaliana (Mouse-ear cress), this protein is Putative defensin-like protein 33.